The chain runs to 276 residues: F-box/LRR-repeat protein 20 (276 aa).

In terms of domain architecture, F-box spans 22 to 68 (AVINKKLPKELLLRIFSFLDVVTLCRCAQVSRAWNVLALDGSNWQRI). LRR repeat units follow at residues 74–100 (QRDI…SLRG), 101–126 (CLGV…SLNG), 127–152 (CTKT…DLAS), 153–178 (CTSI…NISW), 179–204 (CDQV…FLKG), 205–230 (CTQL…NLQT), 231–256 (CLQI…CASG), and 257–276 (CSNI…PRLR).

Interacts with SKP1 and CUL1. Widely expressed, with highest expression in skeletal muscle, heart and brain.

Its subcellular location is the cytoplasm. Substrate-recognition component of the SCF (SKP1-CUL1-F-box protein)-type E3 ubiquitin ligase complex. Role in neural transmission. This chain is F-box/LRR-repeat protein 20 (Fbxl20), found in Rattus norvegicus (Rat).